We begin with the raw amino-acid sequence, 387 residues long: Bifunctional chorismate mutase/prephenate dehydratase (387 aa).

A Chorismate mutase domain is found at 1-92; it reads MNPDNPLLAL…DSVLTQQALL (92 aa). 7 residues coordinate substrate: Arg11, Arg28, Lys39, Asp48, Glu52, Ser84, and Gln88. A Prephenate dehydratase domain is found at 105–285; sequence RIAFLGPKGS…NHTRFIVLAR (181 aa). Residues 299–376 enclose the ACT domain; that stretch reads TLIMATGQQA…RSLKVLGCYP (78 aa).

It is found in the cytoplasm. It catalyses the reaction chorismate = prephenate. The enzyme catalyses prephenate + H(+) = 3-phenylpyruvate + CO2 + H2O. It functions in the pathway amino-acid biosynthesis; L-phenylalanine biosynthesis; phenylpyruvate from prephenate: step 1/1. The protein operates within metabolic intermediate biosynthesis; prephenate biosynthesis; prephenate from chorismate: step 1/1. Functionally, catalyzes the Claisen rearrangement of chorismate to prephenate and the decarboxylation/dehydration of prephenate to phenylpyruvate. The chain is Bifunctional chorismate mutase/prephenate dehydratase (pheA) from Enterobacter agglomerans (Erwinia herbicola).